The chain runs to 292 residues: 4-hydroxy-tetrahydrodipicolinate synthase (292 aa).

A pyruvate-binding site is contributed by threonine 44. Residue tyrosine 132 is the Proton donor/acceptor of the active site. Catalysis depends on lysine 160, which acts as the Schiff-base intermediate with substrate. Isoleucine 202 is a binding site for pyruvate.

Belongs to the DapA family. As to quaternary structure, homotetramer; dimer of dimers.

It is found in the cytoplasm. It catalyses the reaction L-aspartate 4-semialdehyde + pyruvate = (2S,4S)-4-hydroxy-2,3,4,5-tetrahydrodipicolinate + H2O + H(+). It functions in the pathway amino-acid biosynthesis; L-lysine biosynthesis via DAP pathway; (S)-tetrahydrodipicolinate from L-aspartate: step 3/4. Catalyzes the condensation of (S)-aspartate-beta-semialdehyde [(S)-ASA] and pyruvate to 4-hydroxy-tetrahydrodipicolinate (HTPA). The polypeptide is 4-hydroxy-tetrahydrodipicolinate synthase (Magnetococcus marinus (strain ATCC BAA-1437 / JCM 17883 / MC-1)).